The chain runs to 334 residues: Fructose-1,6-bisphosphatase class 1 (334 aa).

Mg(2+) is bound by residues Glu-93, Asp-117, Leu-119, and Asp-120. Substrate-binding positions include Asp-120–Ser-123, Asn-213, Tyr-244, and Lys-274. Mg(2+) is bound at residue Glu-280.

Belongs to the FBPase class 1 family. As to quaternary structure, homotetramer. Mg(2+) serves as cofactor.

The protein resides in the cytoplasm. It carries out the reaction beta-D-fructose 1,6-bisphosphate + H2O = beta-D-fructose 6-phosphate + phosphate. It functions in the pathway carbohydrate biosynthesis; gluconeogenesis. This is Fructose-1,6-bisphosphatase class 1 from Flavobacterium johnsoniae (strain ATCC 17061 / DSM 2064 / JCM 8514 / BCRC 14874 / CCUG 350202 / NBRC 14942 / NCIMB 11054 / UW101) (Cytophaga johnsonae).